A 506-amino-acid chain; its full sequence is Probable alpha-L-arabinofuranosidase B (506 aa).

An N-terminal signal peptide occupies residues 1-26 (MLLPRGFNRAVVTALGVVGTGTLVAA). Residues 27-343 (GPCDIYSSGG…ANIVAAKYAV (317 aa)) form a catalytic region. 3 cysteine pairs are disulfide-bonded: Cys-29–Cys-39, Cys-89–Cys-94, and Cys-184–Cys-185. Asp-227 serves as a coordination point for substrate. The Nucleophile role is filled by Glu-229. Asn-230 contacts substrate. N-linked (GlcNAc...) asparagine glycosylation occurs at Asn-285. Gly-304 serves as a coordination point for substrate. The active-site Proton donor is the Asp-305. Positions 344 to 506 (APLTSGPSLT…VSWVVSTSFA (163 aa)) are ABD. The N-linked (GlcNAc...) asparagine glycan is linked to Asn-375. Cys-409 and Cys-447 are oxidised to a cystine. Residues His-424, Phe-427, Asp-443, His-471, Leu-476, and Asp-496 each coordinate substrate.

It belongs to the glycosyl hydrolase 54 family.

It is found in the secreted. The catalysed reaction is Hydrolysis of terminal non-reducing alpha-L-arabinofuranoside residues in alpha-L-arabinosides.. Its pathway is glycan metabolism; L-arabinan degradation. Alpha-L-arabinofuranosidase involved in the degradation of arabinoxylan, a major component of plant hemicellulose. Able to hydrolyze 1,5-, 1,3- and 1,2-alpha-linkages not only in L-arabinofuranosyl oligosaccharides, but also in polysaccharides containing terminal non-reducing L-arabinofuranoses in side chains, like L-arabinan, arabinogalactan and arabinoxylan. This Aspergillus terreus (strain NIH 2624 / FGSC A1156) protein is Probable alpha-L-arabinofuranosidase B (abfB).